Here is a 359-residue protein sequence, read N- to C-terminus: Fructose-bisphosphate aldolase (359 aa).

Residue Ser61 participates in D-glyceraldehyde 3-phosphate binding. Asp109 acts as the Proton donor in catalysis. Zn(2+) is bound by residues His110, Asp144, Glu174, and His226. A dihydroxyacetone phosphate-binding site is contributed by Gly227. Zn(2+) is bound at residue His265. Residues 266–268 (GGS) and 287–290 (NIDT) contribute to the dihydroxyacetone phosphate site.

Belongs to the class II fructose-bisphosphate aldolase family. It depends on Zn(2+) as a cofactor.

It carries out the reaction beta-D-fructose 1,6-bisphosphate = D-glyceraldehyde 3-phosphate + dihydroxyacetone phosphate. The protein operates within carbohydrate degradation; glycolysis; D-glyceraldehyde 3-phosphate and glycerone phosphate from D-glucose: step 4/4. Functionally, catalyzes the aldol condensation of dihydroxyacetone phosphate (DHAP or glycerone-phosphate) with glyceraldehyde 3-phosphate (G3P) to form fructose 1,6-bisphosphate (FBP) in gluconeogenesis and the reverse reaction in glycolysis. The sequence is that of Fructose-bisphosphate aldolase (fba) from Borreliella burgdorferi (strain ATCC 35210 / DSM 4680 / CIP 102532 / B31) (Borrelia burgdorferi).